Reading from the N-terminus, the 484-residue chain is Keratin, type I cytoskeletal 14 (484 aa).

The tract at residues 1 to 20 is disordered; that stretch reads MATCSRQFTSSSSMKGSCGI. The segment at 1–120 is head; sequence MATCSRQFTS…GIGDGLLVGS (120 aa). The tract at residues 121-156 is coil 1A; it reads EKVTMQNLNDRLATYLDKVRALEEANTELEVKIRDW. An IF rod domain is found at 121–432; that stretch reads EKVTMQNLND…RLLEGEDAHL (312 aa). A linker 1 region spans residues 157–174; the sequence is YQRQRPTEIKDYSPYFKT. The segment at 175 to 266 is coil 1B; the sequence is IEDLKSKILA…KNHEEEMASM (92 aa). The interval 267–289 is linker 12; the sequence is RGQVGGDVNVEMDAAPGVDLSRI. The coil 2 stretch occupies residues 290 to 428; it reads LNEMRDQYEK…ATYRRLLEGE (139 aa). The tail stretch occupies residues 429-484; it reads DAHLSSSQFSSSSQFSSGSQSSRDVTSTNRQIRTKVMDVHDGKVVSTHEQVLRTKN. The tract at residues 431–484 is interaction with Type I keratins and keratin filaments; the sequence is HLSSSQFSSSSQFSSGSQSSRDVTSTNRQIRTKVMDVHDGKVVSTHEQVLRTKN. The segment covering 435 to 450 has biased composition (low complexity); that stretch reads SQFSSSSQFSSGSQSS. Residues 435–457 form a disordered region; it reads SQFSSSSQFSSGSQSSRDVTSTN. Ser447 carries the phosphoserine modification.

The protein belongs to the intermediate filament family. In terms of assembly, heterotetramer of two type I and two type II keratins. Forms a disulfide-linked heterodimer (via 2B domains) with KRT5 (via 2B domains). Forms a heterodimer with KRT1; the interaction is more abundant in the absence of KRT5. Interacts with PLEC isoform 1C, when in a heterodimer with KRT5. Interacts with TRADD and with keratin filaments. Associates with other type I keratins. Interacts with EPPK1. Interacts with KLHL24. Interacts with PKP1 (via N-terminus) and PKP2. A disulfide bond is formed between rather than within filaments and promotes the formation of a keratin filament cage around the nucleus. Post-translationally, ubiquitinated by the BCR(KLHL24) E3 ubiquitin ligase complex. Expressed in the corneal epithelium (at protein level). Expressed in the basal layer of the epidermis and the outer root sheath of hair follicles (at protein level). Expressed in the epithelial basal layer in the tail epidermis. Expressed in the parabasal cell row, basal cell layer, and suprabasal epithelial layer of the tongue.

It is found in the cytoplasm. Its subcellular location is the nucleus. Its function is as follows. The nonhelical tail domain is involved in promoting KRT5-KRT14 filaments to self-organize into large bundles and enhances the mechanical properties involved in resilience of keratin intermediate filaments in vitro. This is Keratin, type I cytoskeletal 14 (Krt14) from Mus musculus (Mouse).